Reading from the N-terminus, the 270-residue chain is tRNA pseudouridine synthase A (270 aa).

The active-site Nucleophile is aspartate 55. Tyrosine 110 serves as a coordination point for substrate.

It belongs to the tRNA pseudouridine synthase TruA family.

The catalysed reaction is uridine(38/39/40) in tRNA = pseudouridine(38/39/40) in tRNA. Functionally, formation of pseudouridine at positions 38, 39 and 40 in the anticodon stem and loop of transfer RNAs. The protein is tRNA pseudouridine synthase A of Methanoculleus marisnigri (strain ATCC 35101 / DSM 1498 / JR1).